A 227-amino-acid chain; its full sequence is Orotidine 5'-phosphate decarboxylase (227 aa).

Substrate-binding positions include Asp-8, Lys-30, 58–67, Thr-117, Arg-177, Gln-186, Gly-206, and Arg-207; that span reads DLKLYDIPNT. The Proton donor role is filled by Lys-60.

This sequence belongs to the OMP decarboxylase family. Type 1 subfamily. In terms of assembly, homodimer.

It carries out the reaction orotidine 5'-phosphate + H(+) = UMP + CO2. It functions in the pathway pyrimidine metabolism; UMP biosynthesis via de novo pathway; UMP from orotate: step 2/2. Its function is as follows. Catalyzes the decarboxylation of orotidine 5'-monophosphate (OMP) to uridine 5'-monophosphate (UMP). The sequence is that of Orotidine 5'-phosphate decarboxylase from Campylobacter lari (strain RM2100 / D67 / ATCC BAA-1060).